The following is a 245-amino-acid chain: Orotidine 5'-phosphate decarboxylase (245 aa).

Residues D22, K44, 71 to 80, T131, R192, Q201, G221, and R222 contribute to the substrate site; that span reads DLKFHDIPNT. Catalysis depends on K73, which acts as the Proton donor.

It belongs to the OMP decarboxylase family. Type 1 subfamily. As to quaternary structure, homodimer.

It catalyses the reaction orotidine 5'-phosphate + H(+) = UMP + CO2. It participates in pyrimidine metabolism; UMP biosynthesis via de novo pathway; UMP from orotate: step 2/2. Catalyzes the decarboxylation of orotidine 5'-monophosphate (OMP) to uridine 5'-monophosphate (UMP). This is Orotidine 5'-phosphate decarboxylase from Salmonella choleraesuis (strain SC-B67).